The chain runs to 149 residues: UPF0178 protein VF_0601 (149 aa).

It belongs to the UPF0178 family.

This is UPF0178 protein VF_0601 from Aliivibrio fischeri (strain ATCC 700601 / ES114) (Vibrio fischeri).